Reading from the N-terminus, the 79-residue chain is Large ribosomal subunit protein bL31 (79 aa).

This sequence belongs to the bacterial ribosomal protein bL31 family. Type A subfamily. Part of the 50S ribosomal subunit.

In terms of biological role, binds the 23S rRNA. In Trichormus variabilis (strain ATCC 29413 / PCC 7937) (Anabaena variabilis), this protein is Large ribosomal subunit protein bL31.